A 267-amino-acid chain; its full sequence is Apolipoprotein A-I (267 aa).

The first 18 residues, 1 to 18 (MKAAVLTLAVLFLTGSQA), serve as a signal peptide directing secretion. 2 tandem repeats follow at residues 68-89 (LKLL…EDLG) and 90-111 (PVTQ…QEMS). A 10 X approximate tandem repeats region spans residues 68–267 (LKLLDNWDSL…EEYAKKLSSQ (200 aa)). A Methionine sulfoxide modification is found at Met-110. The stretch at 112 to 122 (KDLEEVKAKVQ) is one 3; half-length repeat. A run of 5 repeats spans residues 123-144 (PYLD…QKLE), 145-166 (PLRT…EKLS), 167-188 (PLAE…TQLA), 189-210 (PYSD…ESGG), and 211-232 (ASLA…EKAK). Residues 233 to 243 (PALEDLRQGLL) form a 9; half-length repeat. Copy 10 of the repeat occupies 244–267 (PVLESFKVSFLSALEEYAKKLSSQ).

The protein belongs to the apolipoprotein A1/A4/E family. As to quaternary structure, homodimer. Interacts with APOA1BP and CLU. Component of a sperm activating protein complex (SPAP), consisting of APOA1, an immunoglobulin heavy chain, an immunoglobulin light chain and albumin. Interacts with NDRG1. Interacts with SCGB3A2. Interacts with NAXE and YJEFN3. In terms of processing, glycosylated. Post-translationally, palmitoylated. Phosphorylation sites are present in the extracellular medium.

The protein localises to the secreted. Participates in the reverse transport of cholesterol from tissues to the liver for excretion by promoting cholesterol efflux from tissues and by acting as a cofactor for the lecithin cholesterol acyltransferase (LCAT). As part of the SPAP complex, activates spermatozoa motility. The polypeptide is Apolipoprotein A-I (APOA1) (Cebus imitator (Panamanian white-faced capuchin)).